The following is a 378-amino-acid chain: D-alanine--D-alanine ligase (378 aa).

Positions 140–346 constitute an ATP-grasp domain; it reads KKIISQAGIR…YSDLIDRLIQ (207 aa). 170–225 provides a ligand contact to ATP; it reads EEKLGNLTFVKPAKQGSSVGIHRVTNAEEYEKALDDAFKYDYKILVEQGIANPQEI. Mg(2+) contacts are provided by Asp-300, Glu-313, and Asn-315.

It belongs to the D-alanine--D-alanine ligase family. Mg(2+) is required as a cofactor. Requires Mn(2+) as cofactor.

The protein localises to the cytoplasm. It catalyses the reaction 2 D-alanine + ATP = D-alanyl-D-alanine + ADP + phosphate + H(+). It participates in cell wall biogenesis; peptidoglycan biosynthesis. Functionally, cell wall formation. The sequence is that of D-alanine--D-alanine ligase from Limosilactobacillus reuteri (strain DSM 20016) (Lactobacillus reuteri).